A 320-amino-acid chain; its full sequence is mRNA decay activator protein ZFP36 (320 aa).

The segment at 1-15 (MDLSAIYESLMSMSH) is necessary for nuclear export. The necessary and sufficient for the association with mRNA decay enzymes and mRNA decay activation stretch occupies residues 1 to 93 (MDLSAIYESL…PTSPTATPTT (93 aa)). Necessary for localization of ARE-containing mRNAs to processing bodies (PBs) regions lie at residues 1-167 (MDLS…DLAL) and 93-320 (TSSR…SVSE). The tract at residues 17–50 (LSPDHGGTESSGGLWNINSSDSIPSGVTSRLTGR) is disordered. Residues 27–50 (SGGLWNINSSDSIPSGVTSRLTGR) show a composition bias toward polar residues. Ser-53 carries the post-translational modification Phosphoserine; by MAPKAPK2. At Ser-59 the chain carries Phosphoserine. Residues 64 to 68 (PPPPG) form a P-P-P-P-G repeat. Over residues 66-85 (PPGFAPLAPRPGPELSPSPT) the composition is skewed to pro residues. The disordered stretch occupies residues 66–95 (PPGFAPLAPRPGPELSPSPTSPTATPTTSS). Ser-81 and Ser-83 each carry phosphoserine. Residue Thr-85 is modified to Phosphothreonine. Ser-86 carries the post-translational modification Phosphoserine. The segment covering 86-95 (SPTATPTTSS) has biased composition (low complexity). Positions 88 to 161 (TATPTTSSRY…GSRCHFIHNP (74 aa)) are necessary for nuclear localization. Residues 90–166 (TPTTSSRYKT…FIHNPTEDLA (77 aa)) are necessary for RNA-binding. C3H1-type zinc fingers lie at residues 96 to 124 (RYKTELCRTYSESGRCRYGAKCQFAHGPG) and 134 to 162 (KYKTELCHKFYLQGRCPYGSRCHFIHNPT). The segment at 96–187 (RYKTELCRTY…ISFSGLPSGR (92 aa)) is necessary for interaction with PABPN1. The interval 167–320 (LPGQPHVLRQ…PIFNRISVSE (154 aa)) is necessary for mRNA decay activation. Residue Ser-179 is modified to Phosphoserine; by MAPKAPK2. Residues 180–310 (FSGLPSGRRT…PQPPAPPRRL (131 aa)) form a disordered region. The residue at position 190 (Ser-190) is a Phosphoserine. One copy of the P-P-P-P-G repeat lies at 191 to 195 (PPPPG). Residues 197-209 (SGPSLSSCSFSPS) are compositionally biased toward low complexity. At Ser-211 the chain carries Phosphoserine. One copy of the P-P-P-P-G repeat lies at 212 to 216 (PPPPG). Phosphoserine; by MAPK1; in vitro is present on Ser-221. Residue Thr-251 is modified to Phosphothreonine. Ser-270 and Ser-290 each carry phosphoserine. Residues 280–290 (SSGSSLGGSDS) are compositionally biased toward low complexity. Pro residues predominate over residues 300–309 (PPQPPAPPRR). The segment at 306-320 (PPRRLPIFNRISVSE) is interaction with CNOT1. Phosphoserine is present on Ser-317.

As to quaternary structure, associates with cytoplasmic CCR4-NOT and PAN2-PAN3 deadenylase complexes to trigger ARE-containing mRNA deadenylation and decay processes. Part of a mRNA decay activation complex at least composed of poly(A)-specific exoribonucleases CNOT6, EXOSC2 and XRN1 and mRNA-decapping enzymes DCP1A and DCP2. Associates with the RNA exosome complex. Interacts (via phosphorylated form) with 14-3-3 proteins; these interactions promote exclusion of ZFP36 from cytoplasmic stress granules in response to arsenite treatment in a MAPKAPK2-dependent manner and does not prevent CCR4-NOT deadenylase complex recruitment or ZFP36-induced ARE-containing mRNA deadenylation and decay processes. Interacts with 14-3-3 proteins; these interactions occur in response to rapamycin in an Akt-dependent manner. Interacts with AGO2 and AGO4. Interacts (via C-terminus) with CNOT1; this interaction occurs in a RNA-independent manner and induces mRNA deadenylation. Interacts (via N-terminus) with CNOT6. Interacts with CNOT6L. Interacts (via C-terminus) with CNOT7; this interaction occurs in a RNA-independent manner, induces mRNA deadenylation and is inhibited in a phosphorylation MAPKAPK2-dependent manner. Interacts (via unphosphorylated form) with CNOT8; this interaction occurs in a RNA-independent manner and is inhibited in a phosphorylation MAPKAPK2-dependent manner. Interacts with DCP1A. Interacts (via N-terminus) with DCP2. Interacts with EDC3. Interacts (via N-terminus) with EXOSC2. Interacts with heat shock 70 kDa proteins. Interacts with KHSRP; this interaction increases upon cytokine-induced treatment. Interacts with MAP3K4; this interaction enhances the association with SH3KBP1/CIN85. Interacts with MAPKAPK2; this interaction occurs upon skeletal muscle satellite cell activation. Interacts with NCL. Interacts with NUP214; this interaction increases upon lipopolysaccharide (LPS) stimulation. Interacts with PABPC1; this interaction occurs in a RNA-dependent manner. Interacts (via hypophosphorylated form) with PABPN1 (via RRM domain and C-terminal arginine-rich region); this interaction occurs in the nucleus in a RNA-independent manner, decreases in presence of single-stranded poly(A) RNA-oligomer and in a p38 MAPK-dependent-manner and inhibits nuclear poly(A) tail synthesis. Interacts with PAN2. Interacts (via C3H1-type zinc finger domains) with PKM. Interacts (via C3H1-type zinc finger domains) with nuclear RNA poly(A) polymerase. Interacts with PPP2CA; this interaction occurs in LPS-stimulated cells and induces ZFP36 dephosphorylation, and hence may promote ARE-containing mRNAs decay. Interacts (via C-terminus) with PRR5L (via C-terminus); this interaction may accelerate ZFP36-mediated mRNA decay during stress. Interacts (via C-terminus) with SFN; this interaction occurs in a phosphorylation-dependent manner. Interacts (via extreme C-terminal region) with SH3KBP1/CIN85 (via SH3 domains); this interaction enhances MAP3K4-induced phosphorylation of ZFP36 at Ser-59 and Ser-86 and does not alter neither ZFP36 binding to ARE-containing transcripts nor TNF-alpha mRNA decay. Interacts with XRN1. Interacts (via C-terminus and Ser-179 phosphorylated form) with YWHAB; this interaction occurs in a p38/MAPKAPK2-dependent manner, increases cytoplasmic localization of ZFP36 and protects ZFP36 from Ser-179 dephosphorylation by serine/threonine phosphatase 2A, and hence may be crucial for stabilizing ARE-containing mRNAs. Interacts (via phosphorylated form) with YWHAE. Interacts (via C-terminus) with YWHAG; this interaction occurs in a phosphorylation-dependent manner. Interacts with YWHAH; this interaction occurs in a phosphorylation-dependent manner. Interacts with YWHAQ; this interaction occurs in a phosphorylation-dependent manner. Interacts with (via C-terminus) YWHAZ; this interaction occurs in a phosphorylation-dependent manner. Does not interact with SH3KBP1. Interacts (via P-P-P-P-G repeats) with GIGYF2; the interaction is direct. In terms of processing, phosphorylated. Phosphorylation at serine and/or threonine residues occurs in a p38 MAPK- and MAPKAPK2-dependent manner. Phosphorylated by MAPKAPK2 at Ser-53 and Ser-179; phosphorylation increases its stability and cytoplasmic localization, promotes binding to 14-3-3 adapter proteins and inhibits the recruitment of cytoplasmic CCR4-NOT and PAN2-PAN3 deadenylase complexes to the mRNA decay machinery, thereby inhibiting ZFP36-induced ARE-containing mRNA deadenylation and decay processes. Phosphorylation by MAPKAPK2 does not impair ARE-containing RNA-binding. Phosphorylated in a MAPKAPK2- and p38 MAPK-dependent manner upon skeletal muscle satellite cell activation; this phosphorylation inhibits ZFP36-mediated mRNA decay activity, and hence stabilizes MYOD1 mRNA. Phosphorylated by MAPK1 upon mitogen stimulation. Phosphorylated at Ser-59 and Ser-86; these phosphorylations increase in a SH3KBP1-dependent manner. Phosphorylated at serine and threonine residues in a pyruvate kinase PKM- and p38 MAPK-dependent manner. Phosphorylation at Ser-53 may participate in the PKM-mediated degradation of ZFP36 in a p38 MAPK-dependent manner. Dephosphorylated by serine/threonine phosphatase 2A at Ser-179. Post-translationally, ubiquitinated; pyruvate kinase (PKM)-dependent ubiquitination leads to proteasomal degradation through a p38 MAPK signaling pathway.

The protein localises to the nucleus. It localises to the cytoplasm. Its subcellular location is the cytoplasmic granule. The protein resides in the P-body. Its function is as follows. Zinc-finger RNA-binding protein that destabilizes numerous cytoplasmic AU-rich element (ARE)-containing mRNA transcripts by promoting their poly(A) tail removal or deadenylation, and hence provide a mechanism for attenuating protein synthesis. Acts as an 3'-untranslated region (UTR) ARE mRNA-binding adapter protein to communicate signaling events to the mRNA decay machinery. Recruits deadenylase CNOT7 (and probably the CCR4-NOT complex) via association with CNOT1, and hence promotes ARE-mediated mRNA deadenylation. Also functions by recruiting components of the cytoplasmic RNA decay machinery to the bound ARE-containing mRNAs. Self regulates by destabilizing its own mRNA. Binds to 3'-UTR ARE of numerous mRNAs. Also binds to ARE of its own mRNA. Plays a role in anti-inflammatory responses; suppresses tumor necrosis factor (TNF)-alpha production by stimulating ARE-mediated TNF-alpha mRNA decay and several other inflammatory ARE-containing mRNAs in interferon (IFN)- and/or lipopolysaccharide (LPS)-induced macrophages. Also plays a role in the regulation of dendritic cell maturation at the post-transcriptional level, and hence operates as part of a negative feedback loop to limit the inflammatory response. Promotes ARE-mediated mRNA decay of hypoxia-inducible factor HIF1A mRNA during the response of endothelial cells to hypoxia. Positively regulates early adipogenesis of preadipocytes by promoting ARE-mediated mRNA decay of immediate early genes (IEGs). Negatively regulates hematopoietic/erythroid cell differentiation by promoting ARE-mediated mRNA decay of the transcription factor STAT5B mRNA. Plays a role in maintaining skeletal muscle satellite cell quiescence by promoting ARE-mediated mRNA decay of the myogenic determination factor MYOD1 mRNA. Also associates with and regulates the expression of non-ARE-containing target mRNAs at the post-transcriptional level, such as MHC class I mRNAs. Participates in association with argonaute RISC catalytic components in the ARE-mediated mRNA decay mechanism; assists microRNA (miRNA) targeting ARE-containing mRNAs. May also play a role in the regulation of cytoplasmic mRNA decapping; enhances decapping of ARE-containing RNAs, in vitro. Involved in the delivery of target ARE-mRNAs to processing bodies (PBs). In addition to its cytosolic mRNA-decay function, affects nuclear pre-mRNA processing. Negatively regulates nuclear poly(A)-binding protein PABPN1-stimulated polyadenylation activity on ARE-containing pre-mRNA during LPS-stimulated macrophages. Also involved in the regulation of stress granule (SG) and P-body (PB) formation and fusion. Plays a role in the regulation of keratinocyte proliferation, differentiation and apoptosis. Plays a role as a tumor suppressor by inhibiting cell proliferation in breast cancer cells. The sequence is that of mRNA decay activator protein ZFP36 from Rattus norvegicus (Rat).